The primary structure comprises 491 residues: Glucose-6-phosphate 1-dehydrogenase (491 aa).

NADP(+) contacts are provided by residues R50, 92-93 (DV), and K147. H177, K181, E215, and D234 together coordinate substrate. The active-site Proton acceptor is the H239. Residues K339 and K344 each coordinate substrate.

This sequence belongs to the glucose-6-phosphate dehydrogenase family.

It catalyses the reaction D-glucose 6-phosphate + NADP(+) = 6-phospho-D-glucono-1,5-lactone + NADPH + H(+). It functions in the pathway carbohydrate degradation; pentose phosphate pathway; D-ribulose 5-phosphate from D-glucose 6-phosphate (oxidative stage): step 1/3. In terms of biological role, catalyzes the oxidation of glucose 6-phosphate to 6-phosphogluconolactone. The polypeptide is Glucose-6-phosphate 1-dehydrogenase (Dickeya dadantii (strain 3937) (Erwinia chrysanthemi (strain 3937))).